The primary structure comprises 236 residues: uncharacterized protein (236 aa).

Residues 5–73 form the HTH gntR-type domain; it reads QSTVENAKEK…DRKGWFVTQP (69 aa). A DNA-binding region (H-T-H motif) is located at residues 33–52; sequence ERELGELLGIKRMTLRQALL.

This is an uncharacterized protein from Escherichia coli O157:H7.